The sequence spans 681 residues: Calpain-C (681 aa).

Positions 18–331 (LWEDPDFPAV…FSTMEVVYLD (314 aa)) constitute a Calpain catalytic domain. Positions 332–481 (TETSNDEEML…ILGTGSFRLS (150 aa)) are domain III. Positions 482–514 (CLETQTMILLDPFPALKSTDAERCGGPKVKSVC) are linker. A domain IV region spans residues 515–681 (QYEPVYMQLA…HDWIKSILSC (167 aa)). In terms of domain architecture, EF-hand spans 552 to 587 (ANIDICRQVIALQDRSGSGRITFQQFKTFMVNLKSW). Ca(2+) is bound by residues D565, S567, S569, and R571.

This sequence belongs to the peptidase C2 family. In terms of tissue distribution, localized to the salivary glands in the larva.

The protein localises to the cytoplasm. Functionally, not known; does not seem to have protease activity. The protein is Calpain-C of Drosophila melanogaster (Fruit fly).